A 1288-amino-acid chain; its full sequence is 5-oxoprolinase (1288 aa).

A disordered region spans residues 1248–1270 (PGGGGYGDPEDPAPPPGSPPLFP). Pro residues predominate over residues 1259 to 1270 (PAPPPGSPPLFP). Ser-1265 is modified (phosphoserine).

The protein belongs to the oxoprolinase family. Homodimer. In terms of tissue distribution, expressed in testis, kidney and liver.

It localises to the cytoplasm. The protein resides in the cytosol. The catalysed reaction is 5-oxo-L-proline + ATP + 2 H2O = L-glutamate + ADP + phosphate + H(+). Its function is as follows. Catalyzes the cleavage of 5-oxo-L-proline to form L-glutamate coupled to the hydrolysis of ATP to ADP and inorganic phosphate. In Rattus norvegicus (Rat), this protein is 5-oxoprolinase (Oplah).